We begin with the raw amino-acid sequence, 222 residues long: Ribosomal RNA small subunit methyltransferase I (222 aa).

It belongs to the methyltransferase superfamily. RsmI family.

The protein resides in the cytoplasm. The catalysed reaction is cytidine(1402) in 16S rRNA + S-adenosyl-L-methionine = 2'-O-methylcytidine(1402) in 16S rRNA + S-adenosyl-L-homocysteine + H(+). Catalyzes the 2'-O-methylation of the ribose of cytidine 1402 (C1402) in 16S rRNA. This chain is Ribosomal RNA small subunit methyltransferase I, found in Thermotoga maritima (strain ATCC 43589 / DSM 3109 / JCM 10099 / NBRC 100826 / MSB8).